Here is a 530-residue protein sequence, read N- to C-terminus: Lysine--tRNA ligase (530 aa).

Positions 28 to 36 (PSGHIHVGN) match the 'HIGH' region motif. The 'KMSKS' region signature appears at 278-282 (PMSSS).

The protein belongs to the class-I aminoacyl-tRNA synthetase family.

The protein resides in the cytoplasm. It carries out the reaction tRNA(Lys) + L-lysine + ATP = L-lysyl-tRNA(Lys) + AMP + diphosphate. This chain is Lysine--tRNA ligase (lysS), found in Methanocaldococcus jannaschii (strain ATCC 43067 / DSM 2661 / JAL-1 / JCM 10045 / NBRC 100440) (Methanococcus jannaschii).